The following is a 164-amino-acid chain: MRLTTKGRYAVTAMLDLALHAQNGPVSLADISERQGISLSYLEQLFAKLRRNSLVTSVRGPGGGYQLSRSMAAIQVAEVIDAVNESVDVTRCQGDRGCRSGEVCLTHYLWCDLSHQIHEFLSGISLADLVARSDVQDLVRLQDRRQGGGCPLPYAGKIEASAIE.

The HTH rrf2-type domain occupies 2–131; the sequence is RLTTKGRYAV…SGISLADLVA (130 aa).

The protein is Putative HTH-type transcriptional regulator ORF2 of Azotobacter vinelandii.